We begin with the raw amino-acid sequence, 364 residues long: Hepatitis A virus cellular receptor 1 (364 aa).

A signal peptide spans 1-20 (MHPQVVILSLILHLADSVAG). The 101-residue stretch at 21-121 (SVKVGGEAGP…WFNDMKITVS (101 aa)) folds into the Ig-like V-type domain. Residues 21–295 (SVKVGGEAGP…SLLTANTTKG (275 aa)) lie on the Extracellular side of the membrane. Intrachain disulfides connect C36-C105, C46-C57, and C52-C104. N-linked (GlcNAc...) asparagine glycosylation occurs at N65. 12 tandem repeats follow at residues 138-143 (VPTVTT), 144-149 (VRTSTT), 150-155 (VPTTTT), 156-160 (VPMTT), 161-165 (VPTTT), 166-171 (VPTTMS), 172-177 (IPTTTT), 178-183 (VLTTMT), 184-189 (VSTTTS), 190-195 (VPTTTS), 196-201 (IPTTTS), and 202-207 (VPVTTT). The tract at residues 138-207 (VPTVTTVRTS…TTTSVPVTTT (70 aa)) is 12 X 6 AA approximate tandem repeats of V-P-T-T-T-T]. A disordered region spans residues 216–257 (PLPRQNHEPVATSPSSPQPAETHPTTLQGAIRREPTSSPLYS). Residues 227-243 (TSPSSPQPAETHPTTLQ) are compositionally biased toward polar residues. N263, N277, and N291 each carry an N-linked (GlcNAc...) asparagine glycan. The chain crosses the membrane as a helical span at residues 296 to 316 (IYAGVCISVLVLLALLGVIIA). Over 317–364 (KKYFFKKEVQQLSVSFSSLQIKALQNAVEKEVQAEDNIYIENSLYATD) the chain is Cytoplasmic. Residues K338 and K346 each participate in a glycyl lysine isopeptide (Lys-Gly) (interchain with G-Cter in ubiquitin) cross-link.

Belongs to the immunoglobulin superfamily. TIM family. As to quaternary structure, interacts with STAM. Interacts with SELPLG. (Microbial infection) Interacts with hepatitis A virus capsid proteins. In terms of assembly, (Microbial infection) Interacts with Ebolavirus envelope glycoprotein GP. As to quaternary structure, (Microbial infection) Interacts with Zika virus envelope protein E. Post-translationally, ubiquitinated at two lysine residues Lys-338 and Lys-346 on its cytoplasmic domain. Ubiquitination promotes receptor endocytosis and target receptors for lysosomal degradation and termination of receptor signaling. (Microbial infection) Ubiquitination is required for Dengue virus endocytosis. In terms of tissue distribution, widely expressed, with highest levels in kidney and testis. Expressed by activated CD4+ T-cells during the development of helper T-cells responses.

The protein localises to the cell membrane. Phosphatidylserine receptor that plays an important functional role in regulatory B-cells homeostasis including generation, expansion and suppressor functions. As P-selectin/SELPLG ligand, plays a specialized role in activated but not naive T-cell trafficking during inflammatory responses. Controls thereby T-cell accumulation in the inflamed central nervous system (CNS) and the induction of autoimmune disease. Also regulates expression of various anti-inflammatory cytokines and co-inhibitory ligands including IL10. Acts as a regulator of T-cell proliferation. May play a role in kidney injury and repair. Its function is as follows. (Microbial infection) Acts as a receptor for Hepatitis A virus. In terms of biological role, (Microbial infection) Acts as a receptor for Ebolavirus and Marburg virus by binding exposed phosphatidyl-serine at the surface of virion membrane. Serves as a dual receptor for Ebolavirus by also interacting with envelope glycoprotein GP. Functionally, (Microbial infection) Acts as a receptor for Dengue virus by binding exposed phosphatidyl-serine at the surface of virion membrane. TIM1 and Dengue virus are co-internalized during virus entry. (Microbial infection) Acts as a receptor for Zika virus by binding to envelope protein E. Its function is as follows. (Microbial infection) Plays a positive role in Chikungunya virus cell entry. This chain is Hepatitis A virus cellular receptor 1 (HAVCR1), found in Homo sapiens (Human).